Consider the following 206-residue polypeptide: LexA repressor (206 aa).

Positions 28–48 (RAEIARRLGFKSANAAEEHLK) form a DNA-binding region, H-T-H motif. Catalysis depends on for autocatalytic cleavage activity residues Ser-123 and Lys-160.

The protein belongs to the peptidase S24 family. As to quaternary structure, homodimer.

It carries out the reaction Hydrolysis of Ala-|-Gly bond in repressor LexA.. In terms of biological role, represses a number of genes involved in the response to DNA damage (SOS response), including recA and lexA. In the presence of single-stranded DNA, RecA interacts with LexA causing an autocatalytic cleavage which disrupts the DNA-binding part of LexA, leading to derepression of the SOS regulon and eventually DNA repair. The protein is LexA repressor of Shewanella piezotolerans (strain WP3 / JCM 13877).